We begin with the raw amino-acid sequence, 337 residues long: Cytoskeleton protein RodZ (337 aa).

Over 1-111 (MNTEATHDQN…LGKRRKKRDG (111 aa)) the chain is Cytoplasmic. The 53-residue stretch at 19-71 (LRNAREQLGLSQQAVAERLCLKVSTVRDIEEDKAPADLASTFLRGYIRSYARL) folds into the HTH cro/C1-type domain. The segment at residues 30-49 (QQAVAERLCLKVSTVRDIEE) is a DNA-binding region (H-T-H motif). A helical; Signal-anchor for type II membrane protein transmembrane segment spans residues 112-132 (WLMTFTWLVLFVVIGLSGAWW). At 133–337 (WQDRKAQQEE…TLNAEQSPAQ (205 aa)) the chain is on the periplasmic side. Positions 144–167 (TTMADQSSAELSSNSEQGQSVPLN) are enriched in polar residues. The tract at residues 144-235 (TTMADQSSAE…PTAATTPDGA (92 aa)) is disordered. Positions 168–207 (TSTTTDPATTSTPPASVDTTATNTQTPAVTAPAPAVDPQQ) are enriched in low complexity. Residues 208-218 (NAVVSPSQANV) show a composition bias toward polar residues. Residues 219–235 (DTAATPAPTAATTPDGA) are compositionally biased toward low complexity.

Belongs to the RodZ family.

The protein resides in the cell inner membrane. Its function is as follows. Cytoskeletal protein that is involved in cell-shape control through regulation of the length of the long axis. The polypeptide is Cytoskeleton protein RodZ (Escherichia coli (strain K12 / MC4100 / BW2952)).